Here is an 876-residue protein sequence, read N- to C-terminus: Alanine--tRNA ligase (876 aa).

Positions 562, 566, 666, and 670 each coordinate Zn(2+).

The protein belongs to the class-II aminoacyl-tRNA synthetase family. Zn(2+) serves as cofactor.

Its subcellular location is the cytoplasm. The enzyme catalyses tRNA(Ala) + L-alanine + ATP = L-alanyl-tRNA(Ala) + AMP + diphosphate. Functionally, catalyzes the attachment of alanine to tRNA(Ala) in a two-step reaction: alanine is first activated by ATP to form Ala-AMP and then transferred to the acceptor end of tRNA(Ala). Also edits incorrectly charged Ser-tRNA(Ala) and Gly-tRNA(Ala) via its editing domain. This Hahella chejuensis (strain KCTC 2396) protein is Alanine--tRNA ligase.